The primary structure comprises 298 residues: ATP synthase gamma chain (298 aa).

Belongs to the ATPase gamma chain family. As to quaternary structure, F-type ATPases have 2 components, CF(1) - the catalytic core - and CF(0) - the membrane proton channel. CF(1) has five subunits: alpha(3), beta(3), gamma(1), delta(1), epsilon(1). CF(0) has three main subunits: a, b and c.

It is found in the cell inner membrane. In terms of biological role, produces ATP from ADP in the presence of a proton gradient across the membrane. The gamma chain is believed to be important in regulating ATPase activity and the flow of protons through the CF(0) complex. The chain is ATP synthase gamma chain from Acidithiobacillus ferridurans.